The chain runs to 128 residues: Large ribosomal subunit protein bL17 (128 aa).

It belongs to the bacterial ribosomal protein bL17 family. As to quaternary structure, part of the 50S ribosomal subunit. Contacts protein L32.

This Baumannia cicadellinicola subsp. Homalodisca coagulata protein is Large ribosomal subunit protein bL17.